The sequence spans 203 residues: Probable flagellin 1 (203 aa).

The propeptide occupies 1–6 (MRRRRG).

The protein belongs to the archaeal flagellin family.

It localises to the archaeal flagellum. In terms of biological role, flagellin is the subunit protein which polymerizes to form the filaments of archaeal flagella. This chain is Probable flagellin 1 (flaB1), found in Aeropyrum pernix (strain ATCC 700893 / DSM 11879 / JCM 9820 / NBRC 100138 / K1).